The chain runs to 427 residues: Serine--tRNA ligase (427 aa).

230–232 is a binding site for L-serine; sequence TAE. 261–263 provides a ligand contact to ATP; the sequence is RAE. Residue Glu-284 coordinates L-serine. 348–351 provides a ligand contact to ATP; sequence EISS. Ser-384 is a binding site for L-serine.

This sequence belongs to the class-II aminoacyl-tRNA synthetase family. Type-1 seryl-tRNA synthetase subfamily. In terms of assembly, homodimer. The tRNA molecule binds across the dimer.

It is found in the cytoplasm. It carries out the reaction tRNA(Ser) + L-serine + ATP = L-seryl-tRNA(Ser) + AMP + diphosphate + H(+). The catalysed reaction is tRNA(Sec) + L-serine + ATP = L-seryl-tRNA(Sec) + AMP + diphosphate + H(+). It participates in aminoacyl-tRNA biosynthesis; selenocysteinyl-tRNA(Sec) biosynthesis; L-seryl-tRNA(Sec) from L-serine and tRNA(Sec): step 1/1. In terms of biological role, catalyzes the attachment of serine to tRNA(Ser). Is also able to aminoacylate tRNA(Sec) with serine, to form the misacylated tRNA L-seryl-tRNA(Sec), which will be further converted into selenocysteinyl-tRNA(Sec). This Moorella thermoacetica (strain ATCC 39073 / JCM 9320) protein is Serine--tRNA ligase.